A 44-amino-acid polypeptide reads, in one-letter code: Thrombin-like enzyme F202 (44 aa).

The Peptidase S1 domain maps to 1 to 44 (VVGGDECNINEHRFLVALYANSSLLCGGTLINQEWVLIAAHCDR). C26 and C42 form a disulfide bridge. H41 functions as the Charge relay system in the catalytic mechanism.

It belongs to the peptidase S1 family. Snake venom subfamily. In terms of assembly, monomer. Contains 6 disulfide bonds. Expressed by the venom gland.

It is found in the secreted. Enzyme activity is markedly inhibited by TLCK and PMSF, and moderately by SBTi. Platelet aggregating activity is strongly inhibited by TLCK. In terms of biological role, thrombin-like snake venom serine protease that coagulates fibrinogen by inducing a fast degradation of the alpha chain (FGA) from human citrated plasma, and a slow degradation of beta chain (FGB). Potently induces platelet aggregation in both platelet rich plasma and washed platelet preparations in a concentration-dependent fashion. Shows amidolytic activities. In Crotalus durissus cascavella (Northeastern Brazilian rattlesnake), this protein is Thrombin-like enzyme F202.